The chain runs to 181 residues: Adenylate kinase (181 aa).

10–15 (GAGKGT) provides a ligand contact to ATP. The interval 30-59 (STGDLFRANISQQTPLGREAQKYMDAGDLV) is NMP. Residues threonine 31, arginine 36, 57–59 (DLV), 85–88 (GYPR), and glutamine 92 contribute to the AMP site. Positions 126-132 (ARGRNDD) are LID. An ATP-binding site is contributed by arginine 127. Positions 129 and 140 each coordinate AMP. Glycine 166 provides a ligand contact to ATP.

It belongs to the adenylate kinase family. Monomer.

It localises to the cytoplasm. It carries out the reaction AMP + ATP = 2 ADP. It participates in purine metabolism; AMP biosynthesis via salvage pathway; AMP from ADP: step 1/1. In terms of biological role, catalyzes the reversible transfer of the terminal phosphate group between ATP and AMP. Plays an important role in cellular energy homeostasis and in adenine nucleotide metabolism. The sequence is that of Adenylate kinase from Nocardia farcinica (strain IFM 10152).